A 528-amino-acid polypeptide reads, in one-letter code: Galactokinase (528 aa).

Alpha-D-galactose contacts are provided by R53, E59, H60, and D62. ATP-binding residues include G165, G167, S169, and S170. Alpha-D-galactose-binding residues include N213 and D217. Residue D217 is the Proton acceptor of the active site. ATP contacts are provided by S264, N265, and K266. Y274 lines the alpha-D-galactose pocket. S381 carries the post-translational modification Phosphoserine.

The protein belongs to the GHMP kinase family. GalK subfamily.

It catalyses the reaction alpha-D-galactose + ATP = alpha-D-galactose 1-phosphate + ADP + H(+). It participates in carbohydrate metabolism; galactose metabolism. Galactokinase is a key enzyme in the galactose metabolism where it catalyzes the conversion of alpha-D-galactose to galactose 1-phosphate. Can also induce the transcription of the yeast GAL genes in response to the organism being challenged with galactose as the sole source of carbon. It's striking amino acid sequence similarity to GAL3 might explain its GAL3-like induction activity. The polypeptide is Galactokinase (Saccharomyces cerevisiae (strain ATCC 204508 / S288c) (Baker's yeast)).